Consider the following 275-residue polypeptide: uncharacterized protein (275 aa).

The next 6 membrane-spanning stretches (helical) occupy residues 25–45 (LGYFAFGGVFILLGVLAFMTA), 70–90 (LLFFIGIGLIGYVIWMVLSAI), 107–127 (IGNFFSAAVYTSIAWNALRFV), 149–169 (FGQWLTGLTGAGFIVFAIVQF), 203–223 (IARAIIFSAIGYFLIKTAMTA), and 247–267 (ILSILALGLILYGMYAIMKGI).

The protein localises to the cell membrane. This is an uncharacterized protein from Bacillus subtilis (strain 168).